We begin with the raw amino-acid sequence, 565 residues long: Adenine deaminase (565 aa).

The protein belongs to the metallo-dependent hydrolases superfamily. Adenine deaminase family. The cofactor is Mn(2+).

It catalyses the reaction adenine + H2O + H(+) = hypoxanthine + NH4(+). This chain is Adenine deaminase, found in Sinorhizobium fredii (strain NBRC 101917 / NGR234).